We begin with the raw amino-acid sequence, 868 residues long: Receptor-like protein kinase At5g59670 (868 aa).

An N-terminal signal peptide occupies residues 1–22; the sequence is MESSFGLLLALLTLTIIHIVQA. Residues 23 to 500 are Extracellular-facing; that stretch reads QDPQGFISLD…PRLIKPPKKE (478 aa). N-linked (GlcNAc...) asparagine glycans are attached at residues asparagine 38, asparagine 94, asparagine 141, asparagine 287, asparagine 300, asparagine 372, asparagine 405, asparagine 416, asparagine 423, asparagine 445, asparagine 464, and asparagine 471. LRR repeat units follow at residues 409–432, 433–459, and 461–481; these read PPRITSLNLSSSRLNGTIAAAIQS, ITQLETLDLSYNNLTGEVPEFLGKMKS, and SVINLSGNNLNGSIPQALRKK. A helical membrane pass occupies residues 501–521; that stretch reads FPVAIVTLVVFVTVIVVLFLV. Over 522–868 the chain is Cytoplasmic; it reads FRKKMSTIVK…LDTTAVPMAR (347 aa). Threonine 555 is modified (phosphothreonine). The Protein kinase domain occupies 564 to 834; that stretch reads KNFQRVLGKG…SMSQVIHELK (271 aa). ATP is bound by residues 570–578 and lysine 592; that span reads LGKGGFGMV. Tyrosine 637 is subject to Phosphotyrosine. The Proton acceptor role is filled by aspartate 689. Serine 723 is subject to Phosphoserine. Phosphothreonine is present on residues threonine 724 and threonine 729.

It belongs to the protein kinase superfamily. Ser/Thr protein kinase family. Autophosphorylated on Tyr and Thr residues.

It is found in the cell membrane. The enzyme catalyses L-seryl-[protein] + ATP = O-phospho-L-seryl-[protein] + ADP + H(+). The catalysed reaction is L-threonyl-[protein] + ATP = O-phospho-L-threonyl-[protein] + ADP + H(+). It carries out the reaction L-tyrosyl-[protein] + ATP = O-phospho-L-tyrosyl-[protein] + ADP + H(+). Functionally, probable receptor with a dual specificity kinase activity acting on both serine/threonine- and tyrosine-containing substrates. The polypeptide is Receptor-like protein kinase At5g59670 (Arabidopsis thaliana (Mouse-ear cress)).